A 348-amino-acid polypeptide reads, in one-letter code: Dihydroorotase (348 aa).

Residues His17 and His19 each contribute to the Zn(2+) site. Residues 19 to 21 and Asn45 each bind substrate; that span reads HLR. Residues Lys103, His140, and His178 each contribute to the Zn(2+) site. An N6-carboxylysine modification is found at Lys103. His140 is a substrate binding site. Substrate is bound at residue Leu223. Position 251 (Asp251) interacts with Zn(2+). Asp251 is a catalytic residue. Residues His255 and Ala267 each contribute to the substrate site.

This sequence belongs to the metallo-dependent hydrolases superfamily. DHOase family. Class II DHOase subfamily. Homodimer. It depends on Zn(2+) as a cofactor.

The catalysed reaction is (S)-dihydroorotate + H2O = N-carbamoyl-L-aspartate + H(+). It participates in pyrimidine metabolism; UMP biosynthesis via de novo pathway; (S)-dihydroorotate from bicarbonate: step 3/3. Its function is as follows. Catalyzes the reversible cyclization of carbamoyl aspartate to dihydroorotate. This Escherichia fergusonii (strain ATCC 35469 / DSM 13698 / CCUG 18766 / IAM 14443 / JCM 21226 / LMG 7866 / NBRC 102419 / NCTC 12128 / CDC 0568-73) protein is Dihydroorotase.